The following is an 842-amino-acid chain: Translation initiation factor IF-2 (842 aa).

2 disordered regions span residues 42-91 and 139-253; these read ETKR…NLSS and LQKQ…NQEP. Basic and acidic residues-rich tracts occupy residues 176–190 and 199–214; these read IEKR…EERH and SEIR…DERR. The tr-type G domain occupies 340 to 509; the sequence is PRPPVVTIMG…LLQAEMLDLK (170 aa). The interval 349 to 356 is G1; the sequence is GHVDHGKT. 349–356 serves as a coordination point for GTP; it reads GHVDHGKT. Positions 374–378 are G2; the sequence is GITQH. Residues 395 to 398 form a G3 region; sequence DTPG. GTP contacts are provided by residues 395–399 and 449–452; these read DTPGH and NKID. Positions 449-452 are G4; the sequence is NKID. The G5 stretch occupies residues 485-487; it reads SAK.

It belongs to the TRAFAC class translation factor GTPase superfamily. Classic translation factor GTPase family. IF-2 subfamily.

The protein resides in the cytoplasm. In terms of biological role, one of the essential components for the initiation of protein synthesis. Protects formylmethionyl-tRNA from spontaneous hydrolysis and promotes its binding to the 30S ribosomal subunits. Also involved in the hydrolysis of GTP during the formation of the 70S ribosomal complex. The protein is Translation initiation factor IF-2 of Bartonella tribocorum (strain CIP 105476 / IBS 506).